Reading from the N-terminus, the 156-residue chain is Small ribosomal subunit protein uS7 (156 aa).

Belongs to the universal ribosomal protein uS7 family. In terms of assembly, part of the 30S ribosomal subunit. Contacts proteins S9 and S11.

In terms of biological role, one of the primary rRNA binding proteins, it binds directly to 16S rRNA where it nucleates assembly of the head domain of the 30S subunit. Is located at the subunit interface close to the decoding center, probably blocks exit of the E-site tRNA. The sequence is that of Small ribosomal subunit protein uS7 from Rhodopseudomonas palustris (strain BisB18).